We begin with the raw amino-acid sequence, 80 residues long: MAKFCTTITLILVALVLFADFEAPTIVKAELCKRESETWSGRCVNDYQCRDHCINNDRGNDGYCAGGYPWYRSCFCFFSC.

An N-terminal signal peptide occupies residues M1 to A29. 4 cysteine pairs are disulfide-bonded: C32-C80, C43-C64, C49-C74, and C53-C76.

The protein belongs to the DEFL family.

It is found in the secreted. Its function is as follows. Confers broad-spectrum resistance to pathogens. In Arabidopsis thaliana (Mouse-ear cress), this protein is Defensin-like protein 18 (PDF1.5).